The primary structure comprises 336 residues: Anthranilate phosphoribosyltransferase (336 aa).

5-phospho-alpha-D-ribose 1-diphosphate contacts are provided by residues Gly80, 83-84, Thr88, 90-93, 108-116, and Ser120; these read GD, NIST, and KHGNRSITS. Position 80 (Gly80) interacts with anthranilate. Ser92 contacts Mg(2+). Asn111 serves as a coordination point for anthranilate. Arg166 serves as a coordination point for anthranilate. 2 residues coordinate Mg(2+): Asp224 and Glu225.

The protein belongs to the anthranilate phosphoribosyltransferase family. In terms of assembly, homodimer. Requires Mg(2+) as cofactor.

The enzyme catalyses N-(5-phospho-beta-D-ribosyl)anthranilate + diphosphate = 5-phospho-alpha-D-ribose 1-diphosphate + anthranilate. It functions in the pathway amino-acid biosynthesis; L-tryptophan biosynthesis; L-tryptophan from chorismate: step 2/5. Functionally, catalyzes the transfer of the phosphoribosyl group of 5-phosphorylribose-1-pyrophosphate (PRPP) to anthranilate to yield N-(5'-phosphoribosyl)-anthranilate (PRA). In Caldicellulosiruptor saccharolyticus (strain ATCC 43494 / DSM 8903 / Tp8T 6331), this protein is Anthranilate phosphoribosyltransferase.